Consider the following 314-residue polypeptide: Protein nutcracker (314 aa).

Residues 1 to 62 (MSDTKSEIEG…PRLIQEKSTQ (62 aa)) form a disordered region. Positions 21-34 (QQQQQPQQQQNEQQ) are enriched in low complexity. Residues 257-314 (MQMEMKLQPSLLGLPDELYFEIFRYLDKSQLNVVARVNRHLHFYSKEVERKRLKGGRS) are required for interaction with skpA and Cul1, but not with PI31. In terms of domain architecture, F-box spans 264–309 (QPSLLGLPDELYFEIFRYLDKSQLNVVARVNRHLHFYSKEVERKRL).

In terms of assembly, component of an SCF (SKP1-CUL1-F-box protein) E3 ubiquitin-protein ligase complex, at least composed of ntc, skpA and Cul1. Interacts (via F-box domain) with skpA and Cul1. Interacts with Prosalpha7 and PI31. Interacts with Bruce. As to expression, expressed in testis (at protein level).

The protein resides in the cytoplasm. Functionally, functions together with PI31 to control non-apoptotic caspase activation during sperm individualization. Positively regulates PI31 stability. The protein is Protein nutcracker of Drosophila melanogaster (Fruit fly).